A 299-amino-acid polypeptide reads, in one-letter code: 4-hydroxy-tetrahydrodipicolinate synthase (299 aa).

Thr-50 is a binding site for pyruvate. The active-site Proton donor/acceptor is Tyr-139. The active-site Schiff-base intermediate with substrate is the Lys-167. Residue Val-209 participates in pyruvate binding.

This sequence belongs to the DapA family. In terms of assembly, homotetramer; dimer of dimers.

The protein localises to the cytoplasm. It catalyses the reaction L-aspartate 4-semialdehyde + pyruvate = (2S,4S)-4-hydroxy-2,3,4,5-tetrahydrodipicolinate + H2O + H(+). It participates in amino-acid biosynthesis; L-lysine biosynthesis via DAP pathway; (S)-tetrahydrodipicolinate from L-aspartate: step 3/4. Functionally, catalyzes the condensation of (S)-aspartate-beta-semialdehyde [(S)-ASA] and pyruvate to 4-hydroxy-tetrahydrodipicolinate (HTPA). This Synechococcus elongatus (strain ATCC 33912 / PCC 7942 / FACHB-805) (Anacystis nidulans R2) protein is 4-hydroxy-tetrahydrodipicolinate synthase.